A 400-amino-acid chain; its full sequence is Enoyl-[acyl-carrier-protein] reductase [NADH] (400 aa).

NAD(+)-binding positions include 48–53 (GASTGY), 74–75 (FE), 111–112 (DA), and 139–140 (LA). Substrate is bound at residue tyrosine 225. Tyrosine 235 (proton donor) is an active-site residue. NAD(+) is bound by residues lysine 244 and 273-275 (VVT).

Belongs to the TER reductase family. In terms of assembly, monomer.

It catalyses the reaction a 2,3-saturated acyl-[ACP] + NAD(+) = a (2E)-enoyl-[ACP] + NADH + H(+). Its pathway is lipid metabolism; fatty acid biosynthesis. In terms of biological role, involved in the final reduction of the elongation cycle of fatty acid synthesis (FAS II). Catalyzes the reduction of a carbon-carbon double bond in an enoyl moiety that is covalently linked to an acyl carrier protein (ACP). This chain is Enoyl-[acyl-carrier-protein] reductase [NADH], found in Burkholderia lata (strain ATCC 17760 / DSM 23089 / LMG 22485 / NCIMB 9086 / R18194 / 383).